Consider the following 298-residue polypeptide: Ethanolamine ammonia-lyase small subunit (298 aa).

Valine 210, glutamate 231, and cysteine 261 together coordinate adenosylcob(III)alamin.

It belongs to the EutC family. As to quaternary structure, the basic unit is a heterodimer which dimerizes to form tetramers. The heterotetramers trimerize; 6 large subunits form a core ring with 6 small subunits projecting outwards. It depends on adenosylcob(III)alamin as a cofactor.

The protein resides in the bacterial microcompartment. The enzyme catalyses ethanolamine = acetaldehyde + NH4(+). Its pathway is amine and polyamine degradation; ethanolamine degradation. Functionally, catalyzes the deamination of various vicinal amino-alcohols to oxo compounds. Allows this organism to utilize ethanolamine as the sole source of nitrogen and carbon in the presence of external vitamin B12. The sequence is that of Ethanolamine ammonia-lyase small subunit from Salmonella agona (strain SL483).